The chain runs to 849 residues: SMY2 homolog 2 (849 aa).

The region spanning 149–205 (ESQWKYIDSNGNIQGPFGTNNMSQWYQGGYFTPTLQICRLATSPEPFGVNDRFIRLG) is the GYF domain. 4 disordered regions span residues 305–505 (APLS…TTNL), 527–547 (DLKKENSSKKEKKPNRTQLDR), 593–612 (TKINSQSKINKANNGDIKPD), and 634–661 (NRASSLDDFISRTPSPSSSALNSSNTSN). Over residues 308–318 (STTSSRSNKTT) the composition is skewed to low complexity. Residues 319–331 (SSHEEKVPSHEEA) are compositionally biased toward basic and acidic residues. The residue at position 350 (T350) is a Phosphothreonine. 3 stretches are compositionally biased toward basic and acidic residues: residues 361–375 (TKQEEESRGSEKEQN), 387–403 (VDRKDVISTADEPKSKD), and 425–443 (LLEEQQRQEEEKKRREEQR). Residues 410–484 (EEQKRFAKAE…EKQKELLNNI (75 aa)) adopt a coiled-coil conformation. The segment covering 444–455 (KLKKEKKLKQKQ) has biased composition (basic residues). The segment covering 456 to 479 (KKEEEKLKKKKKEEGKLEKEKQKE) has biased composition (basic and acidic residues). The span at 483–505 (NILTGDTETPSSENTATSITTNL) shows a compositional bias: polar residues. The segment covering 594 to 605 (KINSQSKINKAN) has biased composition (polar residues). Over residues 644–661 (SRTPSPSSSALNSSNTSN) the composition is skewed to low complexity.

It belongs to the SMY2/mpd2 family. In terms of assembly, interacts with ribosomes. Interacts with EAP1 and MSL5 (via the GYP domain).

It localises to the cytoplasm. In Saccharomyces cerevisiae (strain ATCC 204508 / S288c) (Baker's yeast), this protein is SMY2 homolog 2 (SYH1).